Reading from the N-terminus, the 602-residue chain is Multidrug and toxin extrusion protein 2 (602 aa).

Over Met-1–Thr-33 the chain is Cytoplasmic. A helical membrane pass occupies residues Leu-34 to Val-54. Residues Ser-55 to Glu-66 are Extracellular-facing. A helical transmembrane segment spans residues Leu-67–Gly-87. The Cytoplasmic portion of the chain corresponds to Leu-88–Leu-119. The helical transmembrane segment at Leu-120–Phe-140 threads the bilayer. Residues Arg-141 to Tyr-153 lie on the Extracellular side of the membrane. The helical transmembrane segment at Val-154–Leu-174 threads the bilayer. Over Gln-175–Gln-219 the chain is Cytoplasmic. Residues Val-220–Val-240 traverse the membrane as a helical segment. The Extracellular segment spans residues Leu-241 to Ser-248. Residues Ala-249–Leu-269 form a helical membrane-spanning segment. Topologically, residues Lys-270–Gly-289 are cytoplasmic. Residues Pro-290–Tyr-309 traverse the membrane as a helical segment. The Extracellular segment spans residues Glu-310–Gln-327. The helical transmembrane segment at Ala-328 to Val-348 threads the bilayer. Over Cys-349–Ala-368 the chain is Cytoplasmic. The chain crosses the membrane as a helical span at residues Val-369 to Leu-389. Residues Lys-390–Asp-402 lie on the Extracellular side of the membrane. A helical transmembrane segment spans residues Val-403–Ile-423. Over Cys-424–Ala-442 the chain is Cytoplasmic. The chain crosses the membrane as a helical span at residues Val-443–Val-463. At Arg-464–Arg-466 the chain is on the extracellular side. Residues Ile-467 to Ala-487 form a helical membrane-spanning segment. Topologically, residues Tyr-488–Arg-578 are cytoplasmic. Positions Lys-503–Ser-529 are disordered. Positions Arg-507 to Thr-518 are enriched in polar residues. A helical transmembrane segment spans residues Gly-579–Ala-599. The Extracellular portion of the chain corresponds to Thr-600–His-602.

Belongs to the multi antimicrobial extrusion (MATE) (TC 2.A.66.1) family. In terms of tissue distribution, high expression in kidney. Very small expression in adrenal gland and lung. As to expression, high expression in kidney. Very small expression in brain and testis. Ubiquitously expressed in all tissues examined except the kidney.

The protein resides in the cell membrane. The protein localises to the apical cell membrane. The catalysed reaction is thiamine(out) + H(+)(in) = thiamine(in) + H(+)(out). It catalyses the reaction estrone 3-sulfate(in) + H(+)(out) = estrone 3-sulfate(out) + H(+)(in). It carries out the reaction creatinine(in) + H(+)(out) = creatinine(out) + H(+)(in). Multidrug efflux pump that functions as a H(+)/organic cation antiporter. Mediates the efflux of cationic compounds, such as the model cations, tetraethylammonium (TEA) and 1-methyl-4-phenylpyridinium (MPP+), the platinum-based drug oxaliplatin or weak bases that are positively charged at physiological pH, cimetidine, the platinum-based drugs cisplatin and oxaliplatin or the antidiabetic drug metformin. Mediates the efflux of endogenous compounds such as, creatinine, thiamine and estrone-3-sulfate. Plays a physiological role in the excretion of drugs, toxins and endogenous metabolites through the kidney. Functionally, non-functional protein. This chain is Multidrug and toxin extrusion protein 2, found in Homo sapiens (Human).